The following is a 339-amino-acid chain: Anthranilate phosphoribosyltransferase (339 aa).

Residues Gly-81, 84–85, Thr-89, 91–94, 109–117, and Ala-121 contribute to the 5-phospho-alpha-D-ribose 1-diphosphate site; these read GD, NIST, and KHGNRNLSS. Anthranilate is bound at residue Gly-81. Ser-93 provides a ligand contact to Mg(2+). An anthranilate-binding site is contributed by Asn-112. Residue Arg-167 coordinates anthranilate. Mg(2+) contacts are provided by Asp-226 and Glu-227.

It belongs to the anthranilate phosphoribosyltransferase family. Homodimer. Mg(2+) serves as cofactor.

The enzyme catalyses N-(5-phospho-beta-D-ribosyl)anthranilate + diphosphate = 5-phospho-alpha-D-ribose 1-diphosphate + anthranilate. Its pathway is amino-acid biosynthesis; L-tryptophan biosynthesis; L-tryptophan from chorismate: step 2/5. Functionally, catalyzes the transfer of the phosphoribosyl group of 5-phosphorylribose-1-pyrophosphate (PRPP) to anthranilate to yield N-(5'-phosphoribosyl)-anthranilate (PRA). This chain is Anthranilate phosphoribosyltransferase, found in Roseobacter denitrificans (strain ATCC 33942 / OCh 114) (Erythrobacter sp. (strain OCh 114)).